The following is a 144-amino-acid chain: MAKRSIYFCGSIRGGRNDAQFYAKIIQHLKQYGDILTEHVGHCGPEEEGLDDKTIHDRDLAWLLQSDVIVAEVTQPSLGVGYELGRAIAADKLVLCLFRPDSGRRLSGMIRGAINSVNFFVEDYHQDEYASKIDQFFTVRVTRP.

Substrate is bound by residues 7–13 (YFCGSIR), tyrosine 22, histidine 39, glutamate 83, and 107–109 (SGM).

It belongs to the 2'-deoxynucleoside 5'-phosphate N-hydrolase 1 family. In terms of assembly, monomer and homodimer.

It localises to the cytoplasm. It is found in the nucleus. The enzyme catalyses a pyrimidine 2'-deoxyribonucleoside 5'-phosphate + H2O = a pyrimidine nucleobase + 2-deoxy-D-ribose 5-phosphate. The catalysed reaction is a purine 2'-deoxyribonucleoside 5'-phosphate + H2O = a purine nucleobase + 2-deoxy-D-ribose 5-phosphate. In terms of biological role, catalyzes the cleavage of the N-glycosidic bond of deoxyribonucleoside 5'-monophosphates to yield deoxyribose 5-phosphate and a purine or pyrimidine base. The chain is Putative 2'-deoxynucleoside 5'-phosphate N-hydrolase 1 from Trichoplax adhaerens (Trichoplax reptans).